The sequence spans 209 residues: Small ribosomal subunit protein uS3 (209 aa).

The KH type-2 domain occupies isoleucine 38–lysine 107.

It belongs to the universal ribosomal protein uS3 family. In terms of assembly, part of the 30S ribosomal subunit. Forms a tight complex with proteins S10 and S14.

Binds the lower part of the 30S subunit head. Binds mRNA in the 70S ribosome, positioning it for translation. The chain is Small ribosomal subunit protein uS3 from Pseudothermotoga lettingae (strain ATCC BAA-301 / DSM 14385 / NBRC 107922 / TMO) (Thermotoga lettingae).